The chain runs to 124 residues: Glycine cleavage system H protein (124 aa).

Positions 22 to 104 constitute a Lipoyl-binding domain; the sequence is KAKVGITDFA…YENGYLFIIE (83 aa). Lys63 carries the post-translational modification N6-lipoyllysine.

This sequence belongs to the GcvH family. In terms of assembly, the glycine cleavage system is composed of four proteins: P, T, L and H. The cofactor is (R)-lipoate.

Functionally, the glycine cleavage system catalyzes the degradation of glycine. The H protein shuttles the methylamine group of glycine from the P protein to the T protein. The protein is Glycine cleavage system H protein of Endomicrobium trichonymphae.